The chain runs to 52 residues: Dibenzothiophene metabolism operon protein NahQ/DoxH (52 aa).

The protein operates within aromatic compound metabolism; naphthalene degradation. Its function is as follows. May be involved in the conversion of 2-hydroxy-4-(2'-oxo-3,5-cyclohexadienyl)-buta-2,4-dienoate to cis-O-hydroxybenzylidenepyruvate. DoxH and DoxJ encode different enzymes that may have interchangeable functions. This chain is Dibenzothiophene metabolism operon protein NahQ/DoxH (nahQ), found in Pseudomonas putida (Arthrobacter siderocapsulatus).